The sequence spans 125 residues: Large ribosomal subunit protein bL12 (125 aa).

It belongs to the bacterial ribosomal protein bL12 family. In terms of assembly, homodimer. Part of the ribosomal stalk of the 50S ribosomal subunit. Forms a multimeric L10(L12)X complex, where L10 forms an elongated spine to which 2 to 4 L12 dimers bind in a sequential fashion. Binds GTP-bound translation factors.

Forms part of the ribosomal stalk which helps the ribosome interact with GTP-bound translation factors. Is thus essential for accurate translation. This Campylobacter curvus (strain 525.92) protein is Large ribosomal subunit protein bL12.